Consider the following 138-residue polypeptide: Cysteine desulfuration protein SufE (138 aa).

Catalysis depends on C51, which acts as the Cysteine persulfide intermediate.

The protein belongs to the SufE family. Homodimer. Interacts with SufS.

The protein localises to the cytoplasm. Its pathway is cofactor biosynthesis; iron-sulfur cluster biosynthesis. Its function is as follows. Participates in cysteine desulfuration mediated by SufS. Cysteine desulfuration mobilizes sulfur from L-cysteine to yield L-alanine and constitutes an essential step in sulfur metabolism for biosynthesis of a variety of sulfur-containing biomolecules. Functions as a sulfur acceptor for SufS, by mediating the direct transfer of the sulfur atom from the S-sulfanylcysteine of SufS, an intermediate product of cysteine desulfuration process. This Pectobacterium carotovorum subsp. carotovorum (strain PC1) protein is Cysteine desulfuration protein SufE.